The sequence spans 331 residues: Glyceraldehyde-3-phosphate dehydrogenase (331 aa).

NAD(+) contacts are provided by residues 12 to 13, D34, R78, and T120; that span reads RI. Residues 149-151, T180, 209-210, and R232 contribute to the D-glyceraldehyde 3-phosphate site; these read SCT and TG. The active-site Nucleophile is the C150. Residue N314 coordinates NAD(+).

Belongs to the glyceraldehyde-3-phosphate dehydrogenase family. Homotetramer.

It is found in the cytoplasm. It catalyses the reaction D-glyceraldehyde 3-phosphate + phosphate + NAD(+) = (2R)-3-phospho-glyceroyl phosphate + NADH + H(+). It participates in carbohydrate degradation; glycolysis; pyruvate from D-glyceraldehyde 3-phosphate: step 1/5. Its function is as follows. Catalyzes the oxidative phosphorylation of glyceraldehyde 3-phosphate (G3P) to 1,3-bisphosphoglycerate (BPG) using the cofactor NAD. The first reaction step involves the formation of a hemiacetal intermediate between G3P and a cysteine residue, and this hemiacetal intermediate is then oxidized to a thioester, with concomitant reduction of NAD to NADH. The reduced NADH is then exchanged with the second NAD, and the thioester is attacked by a nucleophilic inorganic phosphate to produce BPG. This is Glyceraldehyde-3-phosphate dehydrogenase (gapA) from Shimwellia blattae (strain ATCC 29907 / DSM 4481 / JCM 1650 / NBRC 105725 / CDC 9005-74) (Escherichia blattae).